A 336-amino-acid chain; its full sequence is Tetraacyldisaccharide 4'-kinase (336 aa).

An ATP-binding site is contributed by 58–65; sequence AVGGSGKT.

This sequence belongs to the LpxK family.

The catalysed reaction is a lipid A disaccharide + ATP = a lipid IVA + ADP + H(+). It functions in the pathway glycolipid biosynthesis; lipid IV(A) biosynthesis; lipid IV(A) from (3R)-3-hydroxytetradecanoyl-[acyl-carrier-protein] and UDP-N-acetyl-alpha-D-glucosamine: step 6/6. Transfers the gamma-phosphate of ATP to the 4'-position of a tetraacyldisaccharide 1-phosphate intermediate (termed DS-1-P) to form tetraacyldisaccharide 1,4'-bis-phosphate (lipid IVA). The polypeptide is Tetraacyldisaccharide 4'-kinase (Aromatoleum aromaticum (strain DSM 19018 / LMG 30748 / EbN1) (Azoarcus sp. (strain EbN1))).